Here is a 110-residue protein sequence, read N- to C-terminus: N(4)-acetylcytidine amidohydrolase (110 aa).

One can recognise an ASCH domain in the interval 6–93 (TFFERFEQDI…IQEIYPGLEQ (88 aa)). The active-site Proton acceptor is the lysine 20. The active-site Nucleophile is the threonine 23. Glutamate 73 functions as the Proton donor in the catalytic mechanism.

Belongs to the N(4)-acetylcytidine amidohydrolase family.

The enzyme catalyses N(4)-acetylcytidine + H2O = cytidine + acetate + H(+). It catalyses the reaction N(4)-acetyl-2'-deoxycytidine + H2O = 2'-deoxycytidine + acetate + H(+). The catalysed reaction is N(4)-acetylcytosine + H2O = cytosine + acetate + H(+). Its function is as follows. Catalyzes the hydrolysis of N(4)-acetylcytidine (ac4C). In Shewanella sp. (strain ANA-3), this protein is N(4)-acetylcytidine amidohydrolase.